The chain runs to 119 residues: NADH-ubiquinone oxidoreductase chain 3 (119 aa).

A run of 3 helical transmembrane segments spans residues 8-28 (IFIYLVISLLVSLILLGVPFL), 63-83 (LVSILFLIFDLEVTFFFPWAV), and 88-108 (IDLFGFWSMMAFLFILTIGFL).

The protein belongs to the complex I subunit 3 family.

Its subcellular location is the mitochondrion membrane. The catalysed reaction is a ubiquinone + NADH + 5 H(+)(in) = a ubiquinol + NAD(+) + 4 H(+)(out). Core subunit of the mitochondrial membrane respiratory chain NADH dehydrogenase (Complex I) that is believed to belong to the minimal assembly required for catalysis. Complex I functions in the transfer of electrons from NADH to the respiratory chain. The immediate electron acceptor for the enzyme is believed to be ubiquinone. The polypeptide is NADH-ubiquinone oxidoreductase chain 3 (ND3) (Brassica napus (Rape)).